We begin with the raw amino-acid sequence, 351 residues long: Nicotinate-nucleotide--dimethylbenzimidazole phosphoribosyltransferase (351 aa).

The Proton acceptor role is filled by E317.

Belongs to the CobT family.

It catalyses the reaction 5,6-dimethylbenzimidazole + nicotinate beta-D-ribonucleotide = alpha-ribazole 5'-phosphate + nicotinate + H(+). It participates in nucleoside biosynthesis; alpha-ribazole biosynthesis; alpha-ribazole from 5,6-dimethylbenzimidazole: step 1/2. Catalyzes the synthesis of alpha-ribazole-5'-phosphate from nicotinate mononucleotide (NAMN) and 5,6-dimethylbenzimidazole (DMB). This Pseudomonas putida (strain ATCC 700007 / DSM 6899 / JCM 31910 / BCRC 17059 / LMG 24140 / F1) protein is Nicotinate-nucleotide--dimethylbenzimidazole phosphoribosyltransferase.